We begin with the raw amino-acid sequence, 254 residues long: Lipid uptake coordinator A (254 aa).

The next 4 membrane-spanning stretches (helical) occupy residues 5 to 25 (VAVL…FYFV), 44 to 64 (LRIA…FTLL), 85 to 105 (IMAH…EVWL), and 114 to 134 (LFGI…GFYL). The tract at residues 143 to 254 (PPPKPLKPKK…SGVQVAKVDE (112 aa)) is disordered. A compositionally biased stretch (basic residues) spans 148–163 (LKPKKPKQRRLRRKKT). Over residues 169 to 191 (AEPEAAEEAENTELAAQEDEEAV) the composition is skewed to acidic residues. The segment covering 192–220 (EAPPESIESPGGEPESATREAPAAETATA) has biased composition (low complexity). The span at 227–244 (LRNRRPTGKTSHRRRRTR) shows a compositional bias: basic residues.

As to quaternary structure, interacts with the Mce1 and Mce4 accessory subunits Rv0199/OmamA, Rv0177/Mam1C and Rv3492c/Mam4B.

The protein resides in the cell membrane. In terms of biological role, required for the import of both fatty acids and cholesterol during growth in macrophages and in axenic culture. Facilitates the uptake of these lipids by stabilizing protein subunits of the Mce1 and Mce4 multi-subunit transporters, which transport fatty acids and cholesterol, respectively. Required for full virulence in vivo. The sequence is that of Lipid uptake coordinator A from Mycobacterium tuberculosis (strain ATCC 25618 / H37Rv).